Here is a 329-residue protein sequence, read N- to C-terminus: Prostaglandin reductase 1 (329 aa).

T18 is modified (phosphothreonine). S20 carries the phosphoserine modification. NADP(+) contacts are provided by residues 152-155, K178, Y193, N217, 239-245, 270-272, and N321; these read GAVG, CGAISTY, and FVV. At K178 the chain carries N6-(2-hydroxyisobutyryl)lysine; alternate. K178 is modified (N6-acetyllysine; alternate).

It belongs to the NADP-dependent oxidoreductase L4BD family. As to quaternary structure, monomer or homodimer. High expression in the kidney, liver, and intestine but not in leukocytes.

It is found in the cytoplasm. It carries out the reaction 13,14-dihydro-15-oxo-prostaglandin E1 + NADP(+) = 15-oxoprostaglandin E1 + NADPH + H(+). The enzyme catalyses 13,14-dihydro-15-oxo-prostaglandin E2 + NADP(+) = 15-oxoprostaglandin E2 + NADPH + H(+). It catalyses the reaction 13,14-dihydro-15-oxo-prostaglandin F1alpha + NADP(+) = 15-oxoprostaglandin F1alpha + NADPH + H(+). The catalysed reaction is 13,14-dihydro-15-oxo-PGF2alpha + NADP(+) = 15-oxoprostaglandin F2alpha + NADPH + H(+). It carries out the reaction leukotriene B4 + NADP(+) = 12-oxo-leukotriene B4 + NADPH + H(+). The enzyme catalyses 20-hydroxy-leukotriene B4 + NADP(+) = 12-oxo-20-hydroxy-leukotriene B4 + NADPH + H(+). It catalyses the reaction 6-trans-leukotriene B4 + NADP(+) = 12-oxo-(5S)-hydroxy-(6E,8E,10E,14Z)-eicosatetraenoate + NADPH + H(+). The catalysed reaction is (5S,12S)-dihydroxy-(6E,10E,12E,14Z)-eicosatetraenoate + NADP(+) = 12-oxo-(5S)-hydroxy-(6E,8E,10E,14Z)-eicosatetraenoate + NADPH + H(+). It carries out the reaction an n-alkanal + NADP(+) = an alk-2-enal + NADPH + H(+). The enzyme catalyses hexanal + NADP(+) = (E)-hex-2-enal + NADPH + H(+). It catalyses the reaction octanal + NADP(+) = (2E)-octenal + NADPH + H(+). The catalysed reaction is decanal + NADP(+) = (2E)-decenal + NADPH + H(+). It carries out the reaction dodecanal + NADP(+) = (2E)-dodecenal + NADPH + H(+). The enzyme catalyses 4-hydroxynonanal + NADP(+) = (E)-4-hydroxynon-2-enal + NADPH + H(+). It catalyses the reaction pentan-2-one + NADP(+) = (E)-pent-3-en-2-one + NADPH + H(+). The catalysed reaction is nonan-2-one + NADP(+) = (3E)-nonen-2-one + NADPH + H(+). In terms of biological role, NAD(P)H-dependent oxidoreductase involved in metabolic inactivation of pro- and anti-inflammatory eicosanoids: prostaglandins (PG), leukotrienes (LT) and lipoxins (LX). Catalyzes with high efficiency the reduction of the 13,14 double bond of 15-oxoPGs, including 15-oxo-PGE1, 15-oxo-PGE2, 15-oxo-PGF1-alpha and 15-oxo-PGF2-alpha. Catalyzes with lower efficiency the oxidation of the hydroxyl group at C12 of LTB4 and its derivatives, converting them into biologically less active 12-oxo-LTB4 metabolites. Reduces 15-oxo-LXA4 to 13,14 dihydro-15-oxo-LXA4, enhancing neutrophil recruitment at the inflammatory site. May play a role in metabolic detoxification of alkenals and ketones. Reduces alpha,beta-unsaturated alkenals and ketones, particularly those with medium-chain length, showing highest affinity toward (2E)-decenal and (3E)-3-nonen-2-one. May inactivate 4-hydroxy-2-nonenal, a cytotoxic lipid constituent of oxidized low-density lipoprotein particles. In Homo sapiens (Human), this protein is Prostaglandin reductase 1 (PTGR1).